The primary structure comprises 507 residues: MSESKRIKTALVSVYHKEGLDEIITKLYEEGVEFLSTGGTRQFIESLGYPCKAVEDLTTYPSILGGRVKTLHPKIFGGILCRRDLEQDIQQIEKYEIPEIDLVIVDLYPFEATVASGASEADIIEKIDIGGISLIRAAAKNYNDVIIVASQAQYKPLLDMLMEHGATSSLEERRWMAKEAFAVSSHYDSAIFNYFDAGEGSAFRCSVNNQKQLRYGENPHQKGYFYGNLDAMFDQIHGKEISYNNLLDINAAVDLIDEYEDLTFAILKHNNACGLASRPTVLEAWTDALAGDPVSAFGGVLITNGVIDKAAAEEINKIFFEVIIAPDYDVDALEILGQKKNRIILVRKEAKLPKKQFRALLNGVLVQDKDMNIETVADLRTVTDKAPTPEEVEDLLFANKIVKNSKSNAIVLAKGKQLLASGVGQTSRVDALKQAIEKAKSFGFDLNGAVMASDAFFPFPDCVEIADKEGITAVIQPGGSVKDDLTFAYCNEHGMAMVTTGIRHFKH.

The MGS-like domain occupies 1-149 (MSESKRIKTA…KNYNDVIIVA (149 aa)).

The protein belongs to the PurH family.

The catalysed reaction is (6R)-10-formyltetrahydrofolate + 5-amino-1-(5-phospho-beta-D-ribosyl)imidazole-4-carboxamide = 5-formamido-1-(5-phospho-D-ribosyl)imidazole-4-carboxamide + (6S)-5,6,7,8-tetrahydrofolate. It catalyses the reaction IMP + H2O = 5-formamido-1-(5-phospho-D-ribosyl)imidazole-4-carboxamide. The protein operates within purine metabolism; IMP biosynthesis via de novo pathway; 5-formamido-1-(5-phospho-D-ribosyl)imidazole-4-carboxamide from 5-amino-1-(5-phospho-D-ribosyl)imidazole-4-carboxamide (10-formyl THF route): step 1/1. It participates in purine metabolism; IMP biosynthesis via de novo pathway; IMP from 5-formamido-1-(5-phospho-D-ribosyl)imidazole-4-carboxamide: step 1/1. This chain is Bifunctional purine biosynthesis protein PurH, found in Bacteroides thetaiotaomicron (strain ATCC 29148 / DSM 2079 / JCM 5827 / CCUG 10774 / NCTC 10582 / VPI-5482 / E50).